Here is a 490-residue protein sequence, read N- to C-terminus: Zinc finger protein STP4 (490 aa).

Low complexity-rich tracts occupy residues 1–16 and 52–73; these read MLVSSSFASSIDSVMS and PSLPLLSSTTSSSRSTLSSTLN. Residues 1–85 form a disordered region; it reads MLVSSSFASS…PPPPLTTSYS (85 aa). Ser153 and Ser155 each carry phosphoserine. Residues 231–247 are compositionally biased toward low complexity; it reads QQQQQLNSSSSASALPS. A disordered region spans residues 231 to 273; it reads QQQQQLNSSSSASALPSIHSPLTNEHTSRYSSSLKDSAKITKQ. Residues 250–265 are compositionally biased toward polar residues; sequence SPLTNEHTSRYSSSLK. The C2H2-type zinc finger occupies 304–326; the sequence is HKCPICQRGFARNNDLIRHKKRH. The tract at residues 338–375 is disordered; it reads ESDNNSGADDQDDTARTSANNDSDDSNDKLAASSSSEE.

The protein localises to the cytoplasm. It localises to the mitochondrion. It is found in the nucleus. The sequence is that of Zinc finger protein STP4 (STP4) from Saccharomyces cerevisiae (strain ATCC 204508 / S288c) (Baker's yeast).